A 235-amino-acid chain; its full sequence is MAVSVLDPGRRAWCAEALGYEFRDESLLLEALTHTTYANEHPRARANERLEFLGDSVLGMVIAAHLYERYPDLPEGELTKIRAAVVCEPSLAERARVLGIGRHMRFGRGEAVSGRDRDSTLSDAFEAVVGALYLDGGLEAAQRFVLRELGQLVEAARQGLVRVDYKTQLQEQLQRQGAAAPQYRLLVEEGPAHLRRFQVGVYFEGRLLGTGWGRNKKEAEQEAARQALMPEHHSG.

The region spanning 11–137 (RAWCAEALGY…VVGALYLDGG (127 aa)) is the RNase III domain. Glu51 contributes to the Mg(2+) binding site. Residue Asp55 is part of the active site. Mg(2+) contacts are provided by Asp123 and Glu126. Residue Glu126 is part of the active site. The DRBM domain occupies 164–233 (DYKTQLQEQL…ARQALMPEHH (70 aa)).

The protein belongs to the ribonuclease III family. As to quaternary structure, homodimer. Mg(2+) serves as cofactor.

It is found in the cytoplasm. It carries out the reaction Endonucleolytic cleavage to 5'-phosphomonoester.. Functionally, digests double-stranded RNA. Involved in the processing of primary rRNA transcript to yield the immediate precursors to the large and small rRNAs (23S and 16S). Processes some mRNAs, and tRNAs when they are encoded in the rRNA operon. Processes pre-crRNA and tracrRNA of type II CRISPR loci if present in the organism. The sequence is that of Ribonuclease 3 from Symbiobacterium thermophilum (strain DSM 24528 / JCM 14929 / IAM 14863 / T).